Consider the following 601-residue polypeptide: Protein FAM13C (601 aa).

2 disordered regions span residues 82-134 (SMGN…PQSS) and 192-238 (DGQV…EDLQ). The span at 98–111 (ESGRNHGESQETEH) shows a compositional bias: basic and acidic residues. Ser130 carries the phosphoserine modification. Over residues 200–217 (DPAPASTQSAPADSADPA) the composition is skewed to low complexity. Position 258 is a phosphoserine (Ser258). 3 disordered regions span residues 268–304 (QRFNLDPESAPSPPSSQQFMMPRSSSRCGSGDGKEPQ), 327–352 (FEQEKKYRPSHGDKTSNPEVLKWMND), and 366–485 (KLSE…DPVS). Residues 282–294 (SSQQFMMPRSSSR) show a composition bias toward low complexity. Over residues 327-342 (FEQEKKYRPSHGDKTS) the composition is skewed to basic and acidic residues. Phosphoserine is present on residues Ser405 and Ser406. The segment covering 415-446 (VPEKREQTPPQDDGKGTKQDKNLIKPLYDRCR) has biased composition (basic and acidic residues). Residues 462–471 (QEEEDSDEDC) show a composition bias toward acidic residues.

It belongs to the FAM13 family.

In Mus musculus (Mouse), this protein is Protein FAM13C (Fam13c).